A 403-amino-acid polypeptide reads, in one-letter code: Queuine tRNA-ribosyltransferase catalytic subunit 1 (403 aa).

A2 is modified (N-acetylalanine). D105 functions as the Proton acceptor in the catalytic mechanism. Residue 105–109 (DSGGF) coordinates queuine. S139 carries the post-translational modification Phosphoserine. Queuine is bound by residues D159, Q202, and G229. Residues 260–266 (GVGYATD) are RNA binding. D279 (nucleophile) is an active-site residue. Residues 284 to 288 (TRTAR) are RNA binding; important for wobble base 34 recognition. Zn(2+)-binding residues include C317, C319, C322, and H348.

It belongs to the queuine tRNA-ribosyltransferase family. Heterodimer of a catalytic subunit QTRT1 and an accessory subunit QTRT2. The cofactor is Zn(2+). As to expression, expressed in brain, heart, kidney, liver, ling, skeletal muscle, spleen and testis.

It localises to the cytoplasm. It is found in the mitochondrion outer membrane. The protein resides in the nucleus. It carries out the reaction guanosine(34) in tRNA + queuine = queuosine(34) in tRNA + guanine. Its function is as follows. Catalytic subunit of the queuine tRNA-ribosyltransferase (TGT) that catalyzes the base-exchange of a guanine (G) residue with queuine (Q) at position 34 (anticodon wobble position) in tRNAs with GU(N) anticodons (tRNA-Asp, -Asn, -His and -Tyr), resulting in the hypermodified nucleoside queuosine (7-(((4,5-cis-dihydroxy-2-cyclopenten-1-yl)amino)methyl)-7-deazaguanosine). Catalysis occurs through a double-displacement mechanism. The nucleophile active site attacks the C1' of nucleotide 34 to detach the guanine base from the RNA, forming a covalent enzyme-RNA intermediate. The proton acceptor active site deprotonates the incoming queuine, allowing a nucleophilic attack on the C1' of the ribose to form the product. Modification of cytoplasmic tRNAs with queuosine controls the elongation speed of cognate codons, thereby ensuring the correct folding of nascent proteins to maintain proteome integrity. The sequence is that of Queuine tRNA-ribosyltransferase catalytic subunit 1 from Mus musculus (Mouse).